A 160-amino-acid polypeptide reads, in one-letter code: Putative control protein C.MjaVP (160 aa).

Functionally, may be involved in control of expression of the type II restriction enzyme MjaV and/or its methyltransferase M.MjaV. This chain is Putative control protein C.MjaVP, found in Methanocaldococcus jannaschii (strain ATCC 43067 / DSM 2661 / JAL-1 / JCM 10045 / NBRC 100440) (Methanococcus jannaschii).